The following is a 557-amino-acid chain: E3 ubiquitin-protein ligase ARIH1 (557 aa).

Acidic residues predominate over residues 1-47; that stretch reads MDSDEGYNYEFDEDEECSEEDSGAEEEEDEDDDEPDDDTLDLGEVEL. The disordered stretch occupies residues 1–95; that stretch reads MDSDEGYNYE…GGGGGPGHEQ (95 aa). The span at 65–92 shows a compositional bias: gly residues; the sequence is ETGGGGGSALGPGGGGGGGGGGGGGGPG. The UBA-like stretch occupies residues 105–153; sequence TAEQILQHMVECIREVNEVIQNPATITRILLSHFNWDKEKLMERYFDGN. Lysine 142 bears the N6-acetyllysine mark. The TRIAD supradomain stretch occupies residues 182 to 393; it reads QDMPCQICYL…SAWYNCNRYN (212 aa). The Zn(2+) site is built by cysteine 186, cysteine 189, cysteine 203, histidine 205, cysteine 208, cysteine 211, cysteine 231, cysteine 236, cysteine 276, cysteine 281, cysteine 297, cysteine 299, cysteine 304, cysteine 307, histidine 312, cysteine 317, cysteine 344, and cysteine 347. The segment at 186 to 236 adopts an RING-type 1 zinc-finger fold; sequence CQICYLNYPNSYFTGLECGHKFCMQCWSEYLTTKIMEEGMGQTISCPAHGC. The segment at 256–317 adopts an IBR-type zinc-finger fold; that stretch reads LKYQHLITNS…GENWHDPVKC (62 aa). The RING-type 2; atypical zinc-finger motif lies at 344-375; that stretch reads CPKCHVTIEKDGGCNHMVCRNQNCKAEFCWVC. Cysteine 357 is an active-site residue. The Zn(2+) site is built by cysteine 362, cysteine 367, cysteine 372, cysteine 375, histidine 382, and cysteine 389. An ariadne domain region spans residues 408 to 557; that stretch reads RAALQRYLFY…EKDLWEYIED (150 aa).

Belongs to the RBR family. Ariadne subfamily. In terms of assembly, interacts (via the first RING-type zinc finger) with UBE2L3. Associates with cullin-RING ubiquitin ligase (CRL) complexes containing CUL1, CUL2 and CUL3. Interacts with neddylated CUL1. Interacts with neddylated CUL2. Interacts with neddylated CUL3. Interacts with neddylated CUL4A. As to expression, widely expressed.

It localises to the cytoplasm. Its subcellular location is the nucleus. The protein localises to the cajal body. It carries out the reaction [E2 ubiquitin-conjugating enzyme]-S-ubiquitinyl-L-cysteine + [acceptor protein]-L-lysine = [E2 ubiquitin-conjugating enzyme]-L-cysteine + [acceptor protein]-N(6)-ubiquitinyl-L-lysine.. It functions in the pathway protein modification; protein ubiquitination. Autoinhibited by the ariadne domain, which masks the second RING-type zinc finger that contains the active site and inhibits the E3 activity. Inhibition is relieved upon binding to neddylated cullin-RING ubiquitin ligase complexes, which activate the E3 ligase activity of ARIH1. E3 ubiquitin-protein ligase, which catalyzes ubiquitination of target proteins together with ubiquitin-conjugating enzyme E2 UBE2L3. Acts as an atypical E3 ubiquitin-protein ligase by working together with cullin-RING ubiquitin ligase (CRL) complexes and initiating ubiquitination of CRL substrates: associates with CRL complexes and specifically mediates addition of the first ubiquitin on CRLs targets. The initial ubiquitin is then elongated by CDC34/UBE2R1 and UBE2R2. E3 ubiquitin-protein ligase activity is activated upon binding to neddylated cullin-RING ubiquitin ligase complexes. Plays a role in protein translation in response to DNA damage by mediating ubiquitination of EIF4E2, the consequences of EIF4E2 ubiquitination are however unclear. According to a report, EIF4E2 ubiquitination leads to promote EIF4E2 cap-binding and protein translation arrest. According to another report EIF4E2 ubiquitination leads to its subsequent degradation. Acts as the ligase involved in ISGylation of EIF4E2. In vitro, controls the degradation of the LINC (LInker of Nucleoskeleton and Cytoskeleton) complex member SUN2 and may therefore have a role in the formation and localization of the LINC complex, and as a consequence, nuclear subcellular localization and nuclear morphology. The protein is E3 ubiquitin-protein ligase ARIH1 of Homo sapiens (Human).